The sequence spans 358 residues: Small ribosomal subunit biogenesis GTPase RsgA 2 (358 aa).

Positions alanine 106–isoleucine 261 constitute a CP-type G domain. GTP-binding positions include serine 151 to aspartate 154 and glycine 203 to threonine 211. Residues cysteine 284, cysteine 289, histidine 291, and cysteine 297 each contribute to the Zn(2+) site.

This sequence belongs to the TRAFAC class YlqF/YawG GTPase family. RsgA subfamily. As to quaternary structure, monomer. Associates with 30S ribosomal subunit, binds 16S rRNA. It depends on Zn(2+) as a cofactor.

Its subcellular location is the cytoplasm. One of several proteins that assist in the late maturation steps of the functional core of the 30S ribosomal subunit. Helps release RbfA from mature subunits. May play a role in the assembly of ribosomal proteins into the subunit. Circularly permuted GTPase that catalyzes slow GTP hydrolysis, GTPase activity is stimulated by the 30S ribosomal subunit. In Vibrio parahaemolyticus serotype O3:K6 (strain RIMD 2210633), this protein is Small ribosomal subunit biogenesis GTPase RsgA 2.